The sequence spans 188 residues: MSSFIQNQFEQNFITTNVDHVFNWARKSALWPLTFGLACCAIEMIASSTSRFDIARFGAEVFRPSPRQSDLMIVAGTVTLKMAPVLKRIWDQMPDPKWCISMGACSSVGGPFNTYAVLQGVDKIVPVDVYVTGCPPRPENLFYALLKLQDKIDTMTTLVKRPTEVRLDETMLEEFKQQIRIAQIQNPA.

Cys39, Cys40, Cys105, and Cys134 together coordinate [4Fe-4S] cluster.

The protein belongs to the complex I 20 kDa subunit family. In terms of assembly, NDH-1 is composed of 14 different subunits. Subunits NuoB, C, D, E, F, and G constitute the peripheral sector of the complex. [4Fe-4S] cluster serves as cofactor.

It localises to the cell inner membrane. The enzyme catalyses a quinone + NADH + 5 H(+)(in) = a quinol + NAD(+) + 4 H(+)(out). Functionally, NDH-1 shuttles electrons from NADH, via FMN and iron-sulfur (Fe-S) centers, to quinones in the respiratory chain. The immediate electron acceptor for the enzyme in this species is believed to be ubiquinone. Couples the redox reaction to proton translocation (for every two electrons transferred, four hydrogen ions are translocated across the cytoplasmic membrane), and thus conserves the redox energy in a proton gradient. This Solibacter usitatus (strain Ellin6076) protein is NADH-quinone oxidoreductase subunit B 1.